The primary structure comprises 739 residues: Adenosylcobalamin-dependent ribonucleoside-triphosphate reductase (739 aa).

A disulfide bridge links C119 with C419. The interval 147–158 (SMPFSFLFDELM) is effector region-1. Positions 168–313 (ARSNISQIPR…ICNLIGKAVV (146 aa)) are effector region-2. Residues C408 and E410 contribute to the active site. The segment at 565-626 (FHYGAYLIQR…NPNFASAGTV (62 aa)) is adenosylcobalamin-binding-1. Residues 685–724 (LQQAPKEPIDKETYEKRSQEITGNVEEVFSQLNSDVKDLE) are adenosylcobalamin-binding-2.

This sequence belongs to the class II ribonucleoside-triphosphate reductase family. Monomer. Requires adenosylcob(III)alamin as cofactor.

It carries out the reaction a 2'-deoxyribonucleoside 5'-triphosphate + [thioredoxin]-disulfide + H2O = a ribonucleoside 5'-triphosphate + [thioredoxin]-dithiol. Allosterically regulated by ATP and dNTP. This is Adenosylcobalamin-dependent ribonucleoside-triphosphate reductase (rtpR) from Lactobacillus delbrueckii subsp. bulgaricus (strain ATCC BAA-365 / Lb-18).